A 187-amino-acid chain; its full sequence is Transmembrane protein 17A (187 aa).

4 helical membrane-spanning segments follow: residues Ile-49–Leu-69, Phe-82–Gly-102, Leu-114–Cys-134, and Ala-146–Leu-166.

This sequence belongs to the TMEM17 family. In terms of assembly, part of the tectonic-like complex (also named B9 complex).

It localises to the cell projection. The protein resides in the cilium membrane. Its function is as follows. Transmembrane component of the tectonic-like complex, a complex localized at the transition zone of primary cilia and acting as a barrier that prevents diffusion of transmembrane proteins between the cilia and plasma membranes. Required for ciliogenesis and sonic hedgehog/SHH signaling. In Xenopus tropicalis (Western clawed frog), this protein is Transmembrane protein 17A (tmem17-a).